Here is a 430-residue protein sequence, read N- to C-terminus: Small ribosomal subunit protein uS5m (430 aa).

Residues 108 to 128 (AGARKGRGKRTKRKRRKDLNR) are disordered. Residues 111–125 (RKGRGKRTKRKRRKD) are compositionally biased toward basic residues. Residues 218–282 (FDTRILEVRN…NRAVHYLHYI (65 aa)) enclose the S5 DRBM domain.

The protein belongs to the universal ribosomal protein uS5 family. Component of the mitochondrial ribosome small subunit (28S) which comprises a 12S rRNA and about 30 distinct proteins.

It localises to the mitochondrion. The polypeptide is Small ribosomal subunit protein uS5m (MRPS5) (Bos taurus (Bovine)).